We begin with the raw amino-acid sequence, 383 residues long: Protein delta homolog 1 (383 aa).

The signal sequence occupies residues 1–23; that stretch reads MIATGALLRVLLLLLAFGHSTYG. 6 consecutive EGF-like domains span residues 24 to 55, 59 to 86, 88 to 125, 127 to 168, 170 to 206, and 208 to 245; these read AECDPACDPQHGFCEADNVCRCEPGWEGPLCE, TSPGCVNGLCEEPWQCVCKEGWDGKFCE, DIRACTSTPCANNGTCVDLEKGQYECSCTPGFSGKDCQ, KAGP…NFCE, VTNSCTPNPCENDGVCTDIGGDFRCRCPAGFVDKTCS, and PVSNCASGPCLNGGTCLQHTQVSFECLCKPPFMGPTCA. Topologically, residues 24–306 are extracellular; it reads AECDPACDPQ…PLLTEGQAIC (283 aa). Intrachain disulfides connect cysteine 26-cysteine 37, cysteine 30-cysteine 43, cysteine 45-cysteine 54, cysteine 63-cysteine 68, cysteine 76-cysteine 85, cysteine 92-cysteine 103, cysteine 97-cysteine 113, cysteine 115-cysteine 124, cysteine 131-cysteine 144, cysteine 138-cysteine 156, cysteine 158-cysteine 167, cysteine 174-cysteine 185, cysteine 179-cysteine 194, cysteine 196-cysteine 205, cysteine 212-cysteine 223, cysteine 217-cysteine 233, and cysteine 235-cysteine 244. Residues 307-327 form a helical membrane-spanning segment; sequence FTILGVLTSLVVLGTVAIVFL. The Cytoplasmic portion of the chain corresponds to 328 to 383; sequence NKCEAWVSNLRYNHMLRKKKNLLLQYNSGEELAVNIIFPEKIDMTTFNKEAGDEDI.

As to quaternary structure, monomer. Interacts with SH3RF2. Post-translationally, glycosylated. As to expression, pancreas and adrenal glands (at protein level).

Its subcellular location is the membrane. It is found in the cytoplasm. In terms of biological role, may have a role in neuroendocrine differentiation. Inhibits adipocyte differentiation. This Rattus norvegicus (Rat) protein is Protein delta homolog 1 (Dlk1).